A 124-amino-acid polypeptide reads, in one-letter code: Phosphoribosyl-ATP pyrophosphatase (124 aa).

This sequence belongs to the PRA-PH family.

The protein resides in the cytoplasm. It catalyses the reaction 1-(5-phospho-beta-D-ribosyl)-ATP + H2O = 1-(5-phospho-beta-D-ribosyl)-5'-AMP + diphosphate + H(+). The protein operates within amino-acid biosynthesis; L-histidine biosynthesis; L-histidine from 5-phospho-alpha-D-ribose 1-diphosphate: step 2/9. This is Phosphoribosyl-ATP pyrophosphatase (hisE) from Ralstonia nicotianae (strain ATCC BAA-1114 / GMI1000) (Ralstonia solanacearum).